Reading from the N-terminus, the 478-residue chain is Growth/differentiation factor 10 (478 aa).

Residues 1 to 33 form the signal peptide; sequence MARGPARTSLGPGSQQLPLLSLLLLLLLRDADG. The disordered stretch occupies residues 34-70; sequence SHTAAARPPPPAAADGLAGDKNPQRSPGDVAAAQSPG. The propeptide occupies 34-368; it reads SHTAAARPPP…EKTMQKARKK (335 aa). N-linked (GlcNAc...) asparagine glycosylation is found at Asn-118, Asn-155, and Asn-280. Residues 267 to 345 form a disordered region; the sequence is PFQAGDPEPG…GRKDRRKKGQ (79 aa). The span at 291–301 shows a compositional bias: polar residues; it reads TQATGPLQNNE. Residues 331-343 are compositionally biased toward basic residues; that stretch reads LKPRPGRKDRRKK. Disulfide bonds link Cys-376/Cys-443, Cys-405/Cys-475, and Cys-409/Cys-477. Asn-469 carries an N-linked (GlcNAc...) asparagine glycan.

This sequence belongs to the TGF-beta family. In terms of assembly, homodimer or heterodimer. Can form a non-covalent complex of the mature region and the pro-region.

Its subcellular location is the secreted. Its function is as follows. Growth factor involved in osteogenesis and adipogenesis. Plays an inhibitory role in the process of osteoblast differentiation via SMAD2/3 pathway. Plays an inhibitory role in the process of adipogenesis. In Bos taurus (Bovine), this protein is Growth/differentiation factor 10 (GDF10).